The following is a 734-amino-acid chain: Adhesion G protein-coupled receptor E5 (734 aa).

A signal peptide spans 1–26 (MGGPHGGPFLLFHVLCFLLTLSEVGS). Over 27–449 (QNSKACALPC…VEDPKLALIT (423 aa)) the chain is Extracellular. The region spanning 28–70 (NSKACALPCPPNSSCVNGTACRCAPGFISFSGEIFTDPLESCD) is the EGF-like 1 domain. Cystine bridges form between C32-C42, C36-C48, C50-C69, C75-C89, C83-C98, C100-C121, C127-C140, C134-C149, and C151-C170. Residues N39 and N44 are each glycosylated (N-linked (GlcNAc...) asparagine). One can recognise an EGF-like 2; calcium-binding domain in the interval 71 to 122 (DINECGPPSPVDCGSSADCQNTEGGYYCTCSPGYEPVSGAMIFRNESENTCR). N-linked (GlcNAc...) asparagine glycosylation is found at N115 and N136. An EGF-like 3; calcium-binding domain is found at 123–171 (DVDECSSGQHQCHNSTVCFNTVGSYTCHCREGWEPKHGLKNKQKDTICK). The region spanning 265-441 (TYRSLDNTEL…AILMAHYDVE (177 aa)) is the GAIN-B domain. N285, N327, N372, N403, and N418 each carry an N-linked (GlcNAc...) asparagine glycan. Intrachain disulfides connect C393-C423 and C411-C425. Residues 393-441 (CAFWKKDSNGNGSWATTGCWKMGRGNGSITCQCSHLSSFAILMAHYDVE) are GPS. A helical transmembrane segment spans residues 450 to 470 (KVGLALSLACLLLCILTFLLV). Residues 471–478 (RPIQGSRT) are Cytoplasmic-facing. A helical membrane pass occupies residues 479 to 499 (TVHLHLCICLFVGSAIFLAGI). Over 500-519 (ENEGGEVGTRCRLVAVLLHY) the chain is Extracellular. Residues 520–540 (CFLAAFCWMSLEGVELYFLVV) traverse the membrane as a helical segment. The Cytoplasmic segment spans residues 541 to 550 (RVFQGQGMRK). The helical transmembrane segment at 551–571 (LWLCLIGYGVPLIIVGISAGA) threads the bilayer. Over 572–593 (YSKGYGREKFCWLNFEGGFLWS) the chain is Extracellular. Residues 594-614 (FVGPVTFIVLGNAIIFVITVW) form a helical membrane-spanning segment. Over 615 to 637 (KLTQKFSEINPDIKKLKKARVLT) the chain is Cytoplasmic. The chain crosses the membrane as a helical span at residues 638–658 (ITAIAQLFVLGCTWVFGLLLF). Over 659-662 (NPES) the chain is Extracellular. The helical transmembrane segment at 663–683 (WVLSYIFSILNCLQGFFLFVL) threads the bilayer. Residues 684–734 (YCLLNKKVREEYRKWACMVAGNKYSEFATTTSGSGSSHNQTQALRPSESGM) lie on the Cytoplasmic side of the membrane. Residues 712-734 (TTTSGSGSSHNQTQALRPSESGM) are disordered. T713 carries the post-translational modification Phosphothreonine. At S715 the chain carries Phosphoserine. Residue T724 is modified to Phosphothreonine. A phosphoserine mark is found at S730 and S732.

This sequence belongs to the G-protein coupled receptor 2 family. LN-TM7 subfamily. In terms of assembly, forms a heterodimer, consisting of a large extracellular region (alpha subunit) non-covalently linked to a seven-transmembrane moiety (beta subunit). Interacts with complement decay-accelerating factor (DAF) and with chondroitin sulfate. In terms of processing, proteolytically cleaved into 2 subunits, an extracellular alpha subunit and a seven-transmembrane subunit.

The protein localises to the cell membrane. It localises to the secreted. The protein resides in the extracellular space. Its function is as follows. Receptor potentially involved in both adhesion and signaling processes early after leukocyte activation. Plays an essential role in leukocyte migration. The chain is Adhesion G protein-coupled receptor E5 from Bos taurus (Bovine).